We begin with the raw amino-acid sequence, 110 residues long: Mobility group protein 1B (110 aa).

A DNA-binding region (HMG box) is located at residues 5–71; sequence PKRPLSAYML…NYIRALQEYE (67 aa). Over residues 71–81 the composition is skewed to basic and acidic residues; it reads ERNGGGGDDKG. The segment at 71-110 is disordered; that stretch reads ERNGGGGDDKGKKRKGAAPKKGAGKKSKKGAHSDDDGDSE. Residues 82–100 are compositionally biased toward basic residues; that stretch reads KKRKGAAPKKGAGKKSKKG.

The protein belongs to the HMGB family.

It localises to the nucleus. The protein resides in the chromosome. In terms of biological role, found in condensed chromomeres. Binds preferentially to AT-rich DNA. This is Mobility group protein 1B (HMG1B) from Chironomus tentans (Midge).